Reading from the N-terminus, the 1642-residue chain is Cholesterol transporter ABCA5 (1642 aa).

Residues 32 to 52 (SVQEILFPLFFLFWLILISMM) traverse the membrane as a helical segment. 2 N-linked (GlcNAc...) asparagine glycosylation sites follow: asparagine 86 and asparagine 190. The next 6 helical transmembrane spans lie at 220 to 240 (VILIYLVIAFSPFGYFLAIHI), 264 to 284 (LSWVLLYTSLIFLMSLLMAVI), 297 to 317 (IVIFLLFFLYGLSSVFFALML), 327 to 347 (VGVVEFFVTVVFGFVGLLIVL), 355 to 375 (LVWLFSPLCQCAFLIGIAQVM), and 396 to 416 (LIITLTMLALDSVFYALLAVY). An N-linked (GlcNAc...) asparagine glycan is attached at asparagine 458. Residues 478–713 (IRISGIQKAY…WGIGYRLSMY (236 aa)) form the ABC transporter 1 domain. An ATP-binding site is contributed by 514–521 (GHSGTGKS). The helical transmembrane segment at 866–886 (LLLLLIFFAVQIFMFLVHHSF) threads the bilayer. N-linked (GlcNAc...) asparagine glycosylation is present at asparagine 919. Residues 967–987 (VFTAVFNSTMVYSLPVMMNII) form a helical membrane-spanning segment. Asparagine 996 carries N-linked (GlcNAc...) asparagine glycosylation. 6 consecutive transmembrane segments (helical) span residues 1021–1041 (LYFQAALLGIIVTAMPPYFAM), 1071–1091 (VVDIPLFFVVLTLMLGSLFAF), 1102–1122 (FLAVVFCLIAYVPSVILFTYI), 1139–1159 (FIYSVTALACVAVTEITFFLG), 1164–1184 (AVFHYTFCIAIPIYPLLGCLI), and 1207–1227 (LLVAVIMPYLQCVLWIFLLQH). Residues 1290 to 1533 (IMVYNLHKEY…FGKGYFLEIK (244 aa)) enclose the ABC transporter 2 domain. An ATP-binding site is contributed by 1333 to 1340 (GPNGAGKS).

The protein belongs to the ABC transporter superfamily. ABCA family. N-glycosylated. As to expression, expressed in testis, epididymis, lung and brain.

It is found in the lysosome membrane. The protein localises to the late endosome membrane. The protein resides in the golgi apparatus membrane. Its subcellular location is the cell membrane. It catalyses the reaction cholesterol(in) + ATP + H2O = cholesterol(out) + ADP + phosphate + H(+). Functionally, cholesterol efflux transporter in macrophages that is responsible for APOAI/high-density lipoproteins (HDL) formation at the plasma membrane under high cholesterol levels and participates in reverse cholesterol transport. May play a role in the processing of autolysosomes. In Rattus norvegicus (Rat), this protein is Cholesterol transporter ABCA5.